The primary structure comprises 269 residues: Eukaryotic translation initiation factor 3 subunit G-1 (269 aa).

The RRM domain occupies 188 to 266; the sequence is AAIRISNLSE…LILSVEWSKP (79 aa).

This sequence belongs to the eIF-3 subunit G family. Component of the eukaryotic translation initiation factor 3 (eIF-3) complex. The eIF-3 complex interacts with pix.

It is found in the cytoplasm. Its function is as follows. RNA-binding component of the eukaryotic translation initiation factor 3 (eIF-3) complex, which is involved in protein synthesis of a specialized repertoire of mRNAs and, together with other initiation factors, stimulates binding of mRNA and methionyl-tRNAi to the 40S ribosome. The eIF-3 complex specifically targets and initiates translation of a subset of mRNAs involved in cell proliferation. This subunit can bind 18S rRNA. The sequence is that of Eukaryotic translation initiation factor 3 subunit G-1 from Drosophila sechellia (Fruit fly).